The sequence spans 316 residues: Small neutral protease regulatory protein (316 aa).

Residues 1-56 enclose the HTH lysR-type domain; the sequence is MRHLRALCAIADTGSVRRAARELGVSQPALTTQLRRIEQSLGAELFHRGRDGCRPT. Positions 16–35 form a DNA-binding region, H-T-H motif; that stretch reads VRRAARELGVSQPALTTQLR.

Belongs to the LysR transcriptional regulatory family.

Its function is as follows. Transcriptional trans-activator of the gene (mprA) for the small neutral protease. The sequence is that of Small neutral protease regulatory protein (mprR) from Streptomyces coelicolor.